The following is a 428-amino-acid chain: Adenylosuccinate synthetase (428 aa).

GTP contacts are provided by residues 11–17 (GDEGKGK) and 39–41 (GHT). Residue D12 is the Proton acceptor of the active site. Residues D12 and G39 each coordinate Mg(2+). Residues 12–15 (DEGK), 37–40 (NAGH), T130, R144, N226, T241, and R305 each bind IMP. The Proton donor role is filled by H40. 301-307 (VTTGRKR) is a binding site for substrate. GTP is bound by residues R307, 333–335 (KLD), and 415–417 (GTG).

The protein belongs to the adenylosuccinate synthetase family. In terms of assembly, homodimer. Mg(2+) is required as a cofactor.

It is found in the cytoplasm. The catalysed reaction is IMP + L-aspartate + GTP = N(6)-(1,2-dicarboxyethyl)-AMP + GDP + phosphate + 2 H(+). It functions in the pathway purine metabolism; AMP biosynthesis via de novo pathway; AMP from IMP: step 1/2. Plays an important role in the de novo pathway and in the salvage pathway of purine nucleotide biosynthesis. Catalyzes the first committed step in the biosynthesis of AMP from IMP. The polypeptide is Adenylosuccinate synthetase (Candida tropicalis (strain ATCC MYA-3404 / T1) (Yeast)).